The primary structure comprises 177 residues: uncharacterized protein (177 aa).

A run of 4 helical transmembrane segments spans residues 4 to 24 (IIIL…GFIL), 33 to 53 (ILSI…LHWI), 80 to 100 (IAFI…GSFL), and 115 to 135 (MLGA…LLYV).

The protein resides in the cell membrane. This is an uncharacterized protein from Bacillus subtilis (strain 168).